The primary structure comprises 89 residues: Small ribosomal subunit protein uS15 (89 aa).

The protein belongs to the universal ribosomal protein uS15 family. In terms of assembly, part of the 30S ribosomal subunit. Forms a bridge to the 50S subunit in the 70S ribosome, contacting the 23S rRNA.

One of the primary rRNA binding proteins, it binds directly to 16S rRNA where it helps nucleate assembly of the platform of the 30S subunit by binding and bridging several RNA helices of the 16S rRNA. In terms of biological role, forms an intersubunit bridge (bridge B4) with the 23S rRNA of the 50S subunit in the ribosome. The chain is Small ribosomal subunit protein uS15 from Kineococcus radiotolerans (strain ATCC BAA-149 / DSM 14245 / SRS30216).